Consider the following 284-residue polypeptide: 4-diphosphocytidyl-2-C-methyl-D-erythritol kinase (284 aa).

The active site involves Lys-14. 98-108 (PMGGGLGGGSS) lines the ATP pocket. Asp-140 is a catalytic residue.

Belongs to the GHMP kinase family. IspE subfamily.

It carries out the reaction 4-CDP-2-C-methyl-D-erythritol + ATP = 4-CDP-2-C-methyl-D-erythritol 2-phosphate + ADP + H(+). It participates in isoprenoid biosynthesis; isopentenyl diphosphate biosynthesis via DXP pathway; isopentenyl diphosphate from 1-deoxy-D-xylulose 5-phosphate: step 3/6. Functionally, catalyzes the phosphorylation of the position 2 hydroxy group of 4-diphosphocytidyl-2C-methyl-D-erythritol. This chain is 4-diphosphocytidyl-2-C-methyl-D-erythritol kinase, found in Shewanella halifaxensis (strain HAW-EB4).